Here is a 318-residue protein sequence, read N- to C-terminus: Pseudouridine-5'-phosphate glycosidase 1 (318 aa).

E29 acts as the Proton donor in catalysis. Positions 90 and 110 each coordinate substrate. Position 142 (D142) interacts with Mn(2+). Residue 144–146 (SAD) participates in substrate binding. The Nucleophile role is filled by K163.

Belongs to the pseudouridine-5'-phosphate glycosidase family. As to quaternary structure, homotrimer. It depends on Mn(2+) as a cofactor.

The enzyme catalyses D-ribose 5-phosphate + uracil = psi-UMP + H2O. In terms of biological role, catalyzes the reversible cleavage of pseudouridine 5'-phosphate (PsiMP) to ribose 5-phosphate and uracil. Functions biologically in the cleavage direction, as part of a pseudouridine degradation pathway. The polypeptide is Pseudouridine-5'-phosphate glycosidase 1 (Photorhabdus laumondii subsp. laumondii (strain DSM 15139 / CIP 105565 / TT01) (Photorhabdus luminescens subsp. laumondii)).